Here is a 244-residue protein sequence, read N- to C-terminus: Tetraspanin-2A (244 aa).

Residues 1 to 22 (MGIGYGASDEQLEKQIGCVKYT) lie on the Cytoplasmic side of the membrane. The chain crosses the membrane as a helical span at residues 23-43 (LFCFNIVAWMISTALFALTVW). The Extracellular segment spans residues 44–61 (LRAEPGFNDWLRILEAQS). Residues 62-82 (FYIGVYVLIGISIVMMAVSFL) form a helical membrane-spanning segment. At 83–91 (GCLSALMEN) the chain is on the cytoplasmic side. Residues 92-112 (TLALFVFVGTQVFGFIAIVAG) traverse the membrane as a helical segment. At 113–206 (SAVLLQFSTI…TWFFEGKTGW (94 aa)) the chain is on the extracellular side. A helical transmembrane segment spans residues 207–227 (IVALAMTLGLLNVICAVMSFV). The Cytoplasmic segment spans residues 228–244 (LVQAVKKEEEQASNYRR).

This sequence belongs to the tetraspanin (TM4SF) family. As to quaternary structure, forms a complex with Ssk and mesh.

The protein resides in the apicolateral cell membrane. It localises to the cell junction. Its subcellular location is the septate junction. Required for assembly of smooth septate junctions (sSJs), together with Ssk and mesh. Important for barrier function of the midgut epithelium. This is Tetraspanin-2A from Drosophila melanogaster (Fruit fly).